A 160-amino-acid chain; its full sequence is SUMO-conjugating enzyme SCE1 (160 aa).

Residue Ala2 is modified to N-acetylalanine. The UBC core domain occupies 5 to 158 (IARGRLAEER…VKLQSKQYPA (154 aa)). The active-site Glycyl thioester intermediate is the Cys94.

It belongs to the ubiquitin-conjugating enzyme family. In terms of assembly, interacts with SIZ1 (via PHD domain) and MMS21. Interacts with TCP14 and TCP15. Interacts with KIN10.

Its pathway is protein modification; protein sumoylation. Its function is as follows. SUMO-conjugating enzyme that accepts the SUMO proteins from the E1 SUMO-activating heterodimer SAE1/SAE2 and catalyzes its covalent attachment to other proteins with the E3 SUMO ligases SIZ1 and MMS21. Associates with SIZ1 for sumoylation of the transcription factor GTE3. In Arabidopsis thaliana (Mouse-ear cress), this protein is SUMO-conjugating enzyme SCE1 (SCE1).